The primary structure comprises 695 residues: uncharacterized protein (695 aa).

Disordered regions lie at residues 1-112 and 242-262; these read MSRL…KHKK and MKKVSQQLKPQKNTNDSNNDH. Residues 32 to 47 show a composition bias toward low complexity; it reads DSSSSSDSPNFFPSSS. The span at 96-107 shows a compositional bias: basic and acidic residues; the sequence is KTEKEKEKEPIQ. The tr-type G domain occupies 278-492; the sequence is KPRTKLLLLG…KIDKEADTNH (215 aa). GTP contacts are provided by residues 287 to 294, 357 to 361, and 417 to 420; these read GPPKSGKK, IFTTN, and TKMD.

The protein belongs to the TRAFAC class translation factor GTPase superfamily. Classic translation factor GTPase family.

The protein localises to the cytoplasm. The protein resides in the nucleus. This is an uncharacterized protein from Schizosaccharomyces pombe (strain 972 / ATCC 24843) (Fission yeast).